The sequence spans 577 residues: Vacuolar membrane amino acid uptake transporter fnx2 (577 aa).

Residues Met-1–Gly-14 are compositionally biased toward polar residues. A disordered region spans residues Met-1–Thr-80. Residues Ser-22–Asp-39 show a composition bias toward low complexity. The span at Ser-40–Glu-62 shows a compositional bias: basic and acidic residues. The next 14 helical transmembrane spans lie at Val-91–Ser-111, Phe-123–Gly-145, Leu-157–Leu-177, Ile-186–Val-206, Ile-217–Ala-237, Ile-244–Leu-264, Leu-286–Val-306, Leu-317–Phe-337, Leu-356–Phe-376, Leu-391–Leu-411, Ile-418–Tyr-438, Tyr-448–Ile-468, Gly-490–Leu-510, and Leu-547–Val-567.

It belongs to the major facilitator superfamily.

It localises to the vacuole. It is found in the membrane. Functionally, MFS-type transporter involved in vacuolar amino acid uptake. This Schizosaccharomyces pombe (strain 972 / ATCC 24843) (Fission yeast) protein is Vacuolar membrane amino acid uptake transporter fnx2 (fnx2).